Here is a 255-residue protein sequence, read N- to C-terminus: Geranylgeranylglyceryl phosphate synthase (255 aa).

Mg(2+)-binding residues include Asp25 and Ser54. Sn-glycerol 1-phosphate-binding positions include 173–179 (YLEGGSG), 203–204 (GG), and 225–226 (GT).

The protein belongs to the GGGP/HepGP synthase family. Group II subfamily. It depends on Mg(2+) as a cofactor.

It is found in the cytoplasm. It carries out the reaction sn-glycerol 1-phosphate + (2E,6E,10E)-geranylgeranyl diphosphate = sn-3-O-(geranylgeranyl)glycerol 1-phosphate + diphosphate. Its pathway is membrane lipid metabolism; glycerophospholipid metabolism. In terms of biological role, prenyltransferase that catalyzes the transfer of the geranylgeranyl moiety of geranylgeranyl diphosphate (GGPP) to the C3 hydroxyl of sn-glycerol-1-phosphate (G1P). This reaction is the first ether-bond-formation step in the biosynthesis of archaeal membrane lipids. This chain is Geranylgeranylglyceryl phosphate synthase, found in Thermofilum pendens (strain DSM 2475 / Hrk 5).